The sequence spans 396 residues: Acetate kinase (396 aa).

Asn8 contributes to the Mg(2+) binding site. Position 15 (Lys15) interacts with ATP. Substrate is bound at residue Arg89. The active-site Proton donor/acceptor is the Asp146. ATP contacts are provided by residues 206 to 210 (HIGNG), 283 to 285 (DMR), and 331 to 335 (GIGEN). Residue Glu383 coordinates Mg(2+).

It belongs to the acetokinase family. In terms of assembly, homodimer. The cofactor is Mg(2+). Mn(2+) is required as a cofactor.

The protein localises to the cytoplasm. It carries out the reaction acetate + ATP = acetyl phosphate + ADP. Its pathway is metabolic intermediate biosynthesis; acetyl-CoA biosynthesis; acetyl-CoA from acetate: step 1/2. Its function is as follows. Catalyzes the formation of acetyl phosphate from acetate and ATP. Can also catalyze the reverse reaction. The polypeptide is Acetate kinase (Streptococcus gordonii (strain Challis / ATCC 35105 / BCRC 15272 / CH1 / DL1 / V288)).